Consider the following 321-residue polypeptide: Putative ankyrin repeat domain-containing protein 26-like protein (321 aa).

ANK repeat units lie at residues 48-78, 82-111, 115-144, 148-177, and 181-210; these read KHLGKLHRAASRGEVSKVECILSSGSADLDE, KKRTALHLACANGHPEVVALLVDRGCQLDV, KNRTALLKAVQCQEEECATILLEHGADPDL, YGNTTLHYAIYNEDIPMTKKLLLHHANIES, and DELTPFLLAVHEQKQQMEDFLRKQKENLTA. Disordered stretches follow at residues 222-242 and 268-321; these read EYKENETPRNPQNSNPEGTSN and FNKP…NENI. Positions 229–242 are enriched in polar residues; the sequence is PRNPQNSNPEGTSN.

The chain is Putative ankyrin repeat domain-containing protein 26-like protein (ANKRD26P1) from Homo sapiens (Human).